The primary structure comprises 683 residues: Phosphomethylpyrimidine synthase (683 aa).

Residues Asn235, Met264, Tyr293, His329, 349–351 (SRG), 390–393 (DGMR), and Glu429 contribute to the substrate site. Residue His433 participates in Zn(2+) binding. Position 456 (Tyr456) interacts with substrate. Zn(2+) is bound at residue His497. [4Fe-4S] cluster is bound by residues Cys577, Cys580, and Cys585. Residues 647–683 (RQSPGVESTSLESTSLESTVLESTSLESTALEKAKEV) form a disordered region. Residues 653–675 (ESTSLESTSLESTVLESTSLEST) are compositionally biased toward low complexity.

Belongs to the ThiC family. Homodimer. Requires [4Fe-4S] cluster as cofactor.

The catalysed reaction is 5-amino-1-(5-phospho-beta-D-ribosyl)imidazole + S-adenosyl-L-methionine = 4-amino-2-methyl-5-(phosphooxymethyl)pyrimidine + CO + 5'-deoxyadenosine + formate + L-methionine + 3 H(+). It functions in the pathway cofactor biosynthesis; thiamine diphosphate biosynthesis. In terms of biological role, catalyzes the synthesis of the hydroxymethylpyrimidine phosphate (HMP-P) moiety of thiamine from aminoimidazole ribotide (AIR) in a radical S-adenosyl-L-methionine (SAM)-dependent reaction. The polypeptide is Phosphomethylpyrimidine synthase (Shewanella loihica (strain ATCC BAA-1088 / PV-4)).